The primary structure comprises 71 residues: Protein SlyX homolog (71 aa).

Positions 49–71 are disordered; the sequence is KIKESQSSSSMMSNEPEPPPPHY.

It belongs to the SlyX family.

The chain is Protein SlyX homolog from Pseudoalteromonas translucida (strain TAC 125).